We begin with the raw amino-acid sequence, 440 residues long: Putative short-chain fatty acid transporter (440 aa).

Topologically, residues 1 to 19 (MIGRISRFMTRFVSRWLPD) are periplasmic. The helical transmembrane segment at 20-40 (PLIFAMLLTLLTFVIALWLTP) threads the bilayer. The Cytoplasmic portion of the chain corresponds to 41 to 53 (QTPISMVKMWGDG). The helical transmembrane segment at 54 to 74 (FWNLLAFGMQMALIIVTGHAL) threads the bilayer. The Periplasmic portion of the chain corresponds to 75–102 (ASSAPVKSLLRTAASAAKTPVQGVMLVT). Residues 103-123 (FFGSVACVINWGFGLVVGAMF) traverse the membrane as a helical segment. Topologically, residues 124-137 (AREVARRVPGSDYP) are cytoplasmic. The next 2 helical transmembrane spans lie at 138 to 158 (LLIA…SGSM) and 159 to 179 (PLLA…IPVG). Position 180 (Asp-180) is a topological domain, cytoplasmic. The chain crosses the membrane as a helical span at residues 181 to 201 (TLFSGFNIFITVALIVVMPFI). Topologically, residues 202–244 (TRMMMPKPSDVVSIDPKLLMEEADFQKQLPKDAPPSERLEESR) are periplasmic. 2 consecutive transmembrane segments (helical) span residues 245-265 (ILTL…FSEH) and 266-286 (GFNI…LLLH). Topologically, residues 287–313 (KTPMAYMRAISAAARSTAGILVQFPFY) are periplasmic. A helical membrane pass occupies residues 314-334 (AGIQLMMEHSGLGGLITEFFI). The Cytoplasmic portion of the chain corresponds to 335-351 (NVANKDTFPVMTFFSSA). A helical membrane pass occupies residues 352 to 372 (LINFAVPSGGGHWVIQGPFVI). Residues 373 to 394 (PAAQALGADLGKSVMAIAYGEQ) lie on the Periplasmic side of the membrane. Residues 395–415 (WMNMAQPFWALPALAIAGLGV) form a helical membrane-spanning segment. Over 416–419 (RDIM) the chain is Cytoplasmic. A helical membrane pass occupies residues 420 to 440 (GYCITALLFSGVIFVIGLTLF).

The protein localises to the cell inner membrane. May be responsible for the uptake of short-chain fatty acids. In Escherichia coli (strain K12), this protein is Putative short-chain fatty acid transporter (atoE).